The following is a 256-amino-acid chain: MLAFGLTVVRHGETQCNKDGLLQGQKIDSLLSDIGIQQSEAAGQYLRDVKFTNVFVSNMKRAKQTAEIIVRNNRTCHDLELVADPSLIERSFGIAEGGRVIDMKNMAKAAGQPLPEFTPPEGETMEQVKLRIKDFLKAMYQRIANDHQDKVQDGGTSSADESTEAPAGLANDGVSSVPVHALVVGHGAYMSIAMRYFFEDLKCPVPRGLDPAQQFSICPNTGMCRFIITLKCSSVDIALSDIKCVFINRRDHFKTN.

His-11 functions as the Tele-phosphohistidine intermediate in the catalytic mechanism. Glu-89 (proton donor/acceptor) is an active-site residue. Residues 147-170 form a disordered region; the sequence is HQDKVQDGGTSSADESTEAPAGLA.

Belongs to the phosphoglycerate mutase family.

It is found in the cytoplasm. The protein localises to the nucleus. It localises to the mitochondrion. The enzyme catalyses beta-D-fructose 2,6-bisphosphate + H2O = beta-D-fructose 6-phosphate + phosphate. Functionally, fructose-bisphosphatase hydrolyzing fructose-2,6-bisphosphate as well as fructose-1,6-bisphosphate. Acts as a negative regulator of glycolysis by lowering intracellular levels of fructose-2,6-bisphosphate in a p53/TP53-dependent manner, resulting in the pentose phosphate pathway (PPP) activation and NADPH production. Contributes to the generation of reduced glutathione to cause a decrease in intracellular reactive oxygen species (ROS) content, correlating with its ability to protect cells from oxidative or metabolic stress-induced cell death. May play a role in mitophagy inhibition. The sequence is that of Probable fructose-2,6-bisphosphatase TIGAR A from Danio rerio (Zebrafish).